The following is a 620-amino-acid chain: Carotenoid isomerooxygenase (620 aa).

Fe cation-binding residues include histidine 211, histidine 267, and histidine 337. The interval 440–459 (NGKQATAGEESPKRDAKRGR) is disordered. Basic and acidic residues predominate over residues 449–459 (ESPKRDAKRGR). Histidine 612 is a Fe cation binding site.

The protein belongs to the carotenoid oxygenase family. Fe(2+) is required as a cofactor. In terms of tissue distribution, expression follows organogenesis of the larval Bolwig's organ (BO), which mediates larval photophobic behavior. In the adult, expression is restricted exclusively to the brain. Expressed in both neuronal cells and glia cells. Not active within photoreceptors. Active within neuronal cells within the central nervous system.

It catalyses the reaction all-trans-zeaxanthin + O2 = (3R)-11-cis-3-hydroxyretinal + (3R)-all-trans-3-hydroxyretinal. The protein operates within cofactor metabolism; retinol metabolism. Its function is as follows. Catalyzes the oxidative cleavage at the 15,15'-double bond of carotenoids and the simultaneous all-trans to 11-cis isomerization of one cleavage product. Carotenoids like 11-cis retinal can promote visual pigment biogenesis in the dark. Essential for the biosynthesis of the 3-hydroxyretinal chromophore of rhodopsin from zeaxanthin and for proper photoreceptor development. Also essential for larval light perception. This is Carotenoid isomerooxygenase (ninaB) from Drosophila melanogaster (Fruit fly).